The primary structure comprises 256 residues: Trans-aconitate 2-methyltransferase (256 aa).

This sequence belongs to the methyltransferase superfamily. Tam family.

Its subcellular location is the cytoplasm. The enzyme catalyses trans-aconitate + S-adenosyl-L-methionine = (E)-3-(methoxycarbonyl)pent-2-enedioate + S-adenosyl-L-homocysteine. In terms of biological role, catalyzes the S-adenosylmethionine monomethyl esterification of trans-aconitate. The polypeptide is Trans-aconitate 2-methyltransferase (Rhodopseudomonas palustris (strain HaA2)).